Consider the following 497-residue polypeptide: Intermediate filament protein A (497 aa).

Residues 1–32 (MSDLNDRLASYIEKVRFLEAQNRKLAADLDLL) form a coil 1A region. The IF rod domain occupies 1 to 342 (MSDLNDRLAS…KMLEGEENRA (342 aa)). The tract at residues 33–46 (RGRWGKDTLSVRAM) is linker 1. The segment at 47–184 (YEGELQEARK…RVHDQEIAEL (138 aa)) is coil 1B. Residues 185 to 202 (QAMASRDTTPENREYFKN) are linker 12. The coil 2 stretch occupies residues 203-342 (ELASAIRDIR…KMLEGEENRA (140 aa)). The segment at 343–497 (GLRQLVEQVV…THIQRSSHTI (155 aa)) is tail. The 119-residue stretch at 375–493 (SRTSFQRSAK…EERATHIQRS (119 aa)) folds into the LTD domain.

This sequence belongs to the intermediate filament family. As to quaternary structure, a and B can form homopolymers. In terms of tissue distribution, giant body muscle cells.

The protein localises to the cytoplasm. The sequence is that of Intermediate filament protein A from Ascaris suum (Pig roundworm).